The following is a 299-amino-acid chain: Oxygen-dependent coproporphyrinogen-III oxidase (299 aa).

Ser-92 lines the substrate pocket. Mn(2+)-binding residues include His-96 and His-106. The Proton donor role is filled by His-106. Residue 108 to 110 (NVR) coordinates substrate. Residues His-145 and His-175 each contribute to the Mn(2+) site. The segment at 240-275 (YVEFNLVWDRGTLFGLQTGGRTESILMSMPPLVRWE) is important for dimerization. 258–260 (GGR) contacts substrate.

The protein belongs to the aerobic coproporphyrinogen-III oxidase family. Homodimer. Requires Mn(2+) as cofactor.

It localises to the cytoplasm. It catalyses the reaction coproporphyrinogen III + O2 + 2 H(+) = protoporphyrinogen IX + 2 CO2 + 2 H2O. Its pathway is porphyrin-containing compound metabolism; protoporphyrin-IX biosynthesis; protoporphyrinogen-IX from coproporphyrinogen-III (O2 route): step 1/1. Involved in the heme biosynthesis. Catalyzes the aerobic oxidative decarboxylation of propionate groups of rings A and B of coproporphyrinogen-III to yield the vinyl groups in protoporphyrinogen-IX. This Escherichia coli O127:H6 (strain E2348/69 / EPEC) protein is Oxygen-dependent coproporphyrinogen-III oxidase.